A 778-amino-acid chain; its full sequence is Preaspterpenacid I synthase sttA (778 aa).

Positions 4–359 (ISDVMKHCVP…RYHRTDLATT (356 aa)) are sesterterpenoid synthase. Asp-105 is a binding site for Mg(2+). Residue Asp-105 coordinates substrate. The substrate stretch occupies residues 211-214 (RVNE). Asn-255 contributes to the substrate binding site. Substrate stretches follow at residues 259 to 263 (SFPKE) and 350 to 351 (RY). A geranylfarneyl diphosphate synthase region spans residues 360 to 774 (AEDRATLIGK…RMMLLGMGPK (415 aa)). A disordered region spans residues 423-445 (AFKKSNPRNGKQNGTEGSKGTFT). The segment covering 429 to 445 (PRNGKQNGTEGSKGTFT) has biased composition (polar residues). The isopentenyl diphosphate site is built by Lys-493, Arg-496, and His-525. 2 residues coordinate Mg(2+): Asp-532 and Asp-536. A dimethylallyl diphosphate-binding site is contributed by Arg-541. Residue Arg-542 participates in isopentenyl diphosphate binding. Dimethylallyl diphosphate-binding residues include Lys-619, Thr-620, Gln-657, Asn-664, and Lys-674.

The protein in the N-terminal section; belongs to the terpene synthase family. It in the C-terminal section; belongs to the FPP/GGPP synthase family.

The enzyme catalyses 4 isopentenyl diphosphate + dimethylallyl diphosphate = (2E,6E,10E,14E)-geranylfarnesyl diphosphate + 4 diphosphate. It carries out the reaction (2E,6E,10E,14E)-geranylfarnesyl diphosphate + H2O = preaspterpenacid acid I + diphosphate. It participates in secondary metabolite biosynthesis; terpenoid biosynthesis. Sesterterpenoid synthase; part of the gene cluster that mediates the biosynthesis of aspterpenacids. Performs both prenyl transferase and terpene cyclase activity, converting isopentenyl diphosphate and dimethylallyl diphosphate into geranylfarnesyl diphosphate (GFPP) and then converting GFPP into preaspterpenacid I. C22-oxidative modification of preaspterpenacid I by the cytochrome P450 monooxygenase sttB then leads to preaspterpenacid II. It has still to be determined how preaspterpenacid II is further modified to produce aspterpenacids. The chain is Preaspterpenacid I synthase sttA from Aspergillus terreus.